Reading from the N-terminus, the 84-residue chain is Putative defensin-like protein 38 (84 aa).

The signal sequence occupies residues 1 to 26 (MASSKNGTVLFVSLMILLLISTGVKA). Intrachain disulfides connect C28-C84, C41-C65, C50-C76, and C54-C78.

It belongs to the DEFL family.

The protein resides in the secreted. This is Putative defensin-like protein 38 from Arabidopsis thaliana (Mouse-ear cress).